Here is a 318-residue protein sequence, read N- to C-terminus: Death effector domain-containing protein (318 aa).

In terms of domain architecture, DED spans 25 to 103 (SLHRMFDIVG…RHDLLPYVTL (79 aa)). Positions 128–191 (PRALSDPEPR…SVTPDPKEKQ (64 aa)) are disordered.

As to quaternary structure, interacts with CASP8, CASP10, KRT8, KRT18, CASP3 and FADD. Homodimerizes and heterodimerizes with DEDD2. Exists predominantly in a mono- or diubiquitinated form. Ubiquitously expressed.

The protein resides in the cytoplasm. Its subcellular location is the nucleus. The protein localises to the nucleolus. A scaffold protein that directs CASP3 to certain substrates and facilitates their ordered degradation during apoptosis. May also play a role in mediating CASP3 cleavage of KRT18. Regulates degradation of intermediate filaments during apoptosis. May play a role in the general transcription machinery in the nucleus and might be an important regulator of the activity of GTF3C3. Inhibits DNA transcription in vitro. In Mus musculus (Mouse), this protein is Death effector domain-containing protein (Dedd).